Here is a 1537-residue protein sequence, read N- to C-terminus: MTMPHRYMFLAVFTLLALTSVASGATEACLPAGQRKSGMNINFYQYSLKDSSTYSNAAYMAYGYASKTKLGSVGGQTDISIDYNIPCVSSSGTFPCPQEDSYGNWGCKGMGACSNSQGIAYWSTDLFGFYTTPTNVTLEMTGYFLPPQTGSYTFKFATVDDSAILSVGGATAFNCCAQQQPPITSTNFTIDGIKPWGGSLPPNIEGTVYMYAGYYYPMKVVYSNAVSWGTLPISVTLPDGTTVSDDFEGYVYSFDDDLSQSNCTVPDPSNYAVSTTTTTTEPWTGTFTSTSTEMTTVTGTNGVPTDETVIVIRTPTTASTIITTTEPWNSTFTSTSTELTTVTGTNGVRTDETIIVIRTPTTATTAITTTEPWNSTFTSTSTELTTVTGTNGLPTDETIIVIRTPTTATTAMTTTQPWNDTFTSTSTELTTVTGTNGLPTDETIIVIRTPTTATTAMTTTQPWNDTFTSTSTELTTVTGTNGLPTDETIIVIRTPTTATTAMTTTQPWNDTFTSTSTEITTVTGTNGLPTDETIIVIRTPTTATTAMTTPQPWNDTFTSTSTEMTTVTGTNGLPTDETIIVIRTPTTATTAITTTEPWNSTFTSTSTEMTTVTGTNGLPTDETIIVIRTPTTATTAITTTQPWNDTFTSTSTEMTTVTGTNGLPTDETIIVIRTPTTATTAMTTTQPWNDTFTSTSTEITTVTGTTGLPTDETIIVIRTPTTATTAMTTTQPWNDTFTSTSTEMTTVTGTNGVPTDETVIVIRTPTSEGLISTTTEPWTGTFTSTSTEMTTVTGTNGQPTDETVIVIRTPTSEGLVTTTTEPWTGTFTSTSTEMTTITGTNGVPTDETVIVIRTPTSEGLISTTTEPWTGTFTSTSTEMTTITGTNGQPTDETVIVIRTPTSEGLISTTTEPWTGTFTSTSTEMTHVTGTNGVPTDETVIVIRTPTSEGLISTTTEPWTGTFTSTSTEVTTITGTNGQPTDETVIVIRTPTSEGLISTTTEPWTGTFTSTSTEMTTVTGTNGQPTDETVIVIRTPTSEGLVTTTTEPWTGTFTSTSTEMSTVTGTNGLPTDETVIVVKTPTTAISSSLSSSSSGQITSSITSSRPIITPFYPSNGTSVISSSVISSSVTSSLFTSSPVISSSVISSSTTTSTSIFSESSKSSVIPTSSSTSGSSESETSSAGSVSSSSFISSESSKSPTYSSSSLPLVTSATTSQETASSLPPATTTKTSEQTTLVTVTSCESHVCTESISPAIVSTATVTVSGVTTEYTTWCPISTTETTKQTKGTTEQTTETTKQTTVVTISSCESDVCSKTASPAIVSTSTATINGVTTEYTTWCPISTTESRQQTTLVTVTSCESGVCSETASPAIVSTATATVNDVVTVYPTWRPQTANEESVSSKMNSATGETTTNTLAAETTTNTVAAETITNTGAAETKTVVTSSLSRSNHAETQTASATDVIGHSSSVVSVSETGNTKSLTSSGLSTMSQQPRSTPASSMVGYSTASLEISTYAGSANSLLAGSGLSVFIASLLLAII.

The first 24 residues, 1-24 (MTMPHRYMFLAVFTLLALTSVASG), serve as a signal peptide directing secretion. One can recognise a PA14 domain in the interval 74 to 249 (GGQTDISIDY…GTTVSDDFEG (176 aa)). Asparagine 135 and asparagine 187 each carry an N-linked (GlcNAc...) asparagine glycan. Residues 197 to 240 (GGSLPPNIEGTVYMYAGYYYPMKVVYSNAVSWGTLPISVTLPDG) are sugar recognition. An N-linked (GlcNAc...) asparagine glycan is attached at asparagine 262. 18 tandem repeats follow at residues 278 to 322 (TTTE…STII), 323 to 367 (TTTE…TTAI), 368 to 412 (TTTE…TTAM), 413 to 457 (TTTQ…TTAM), 458 to 502 (TTTQ…TTAM), 503 to 547 (TTTQ…TTAM), 548 to 592 (TTPQ…TTAI), 593 to 637 (TTTE…TTAI), 638 to 682 (TTTQ…TTAM), 683 to 727 (TTTQ…TTAM), 728 to 772 (TTTQ…GLIS), 773 to 817 (TTTE…GLVT), 818 to 862 (TTTE…GLIS), 863 to 907 (TTTE…GLIS), 908 to 952 (TTTE…GLIS), 953 to 997 (TTTE…GLIS), 998 to 1042 (TTTE…GLVT), and 1043 to 1087 (TTTE…ISSS). The tract at residues 278–1087 (TTTEPWTGTF…KTPTTAISSS (810 aa)) is 18 X 45 AA approximate tandem repeats, Thr-rich. N-linked (GlcNAc...) asparagine glycans are attached at residues asparagine 329, asparagine 374, asparagine 419, asparagine 464, asparagine 509, asparagine 554, asparagine 599, asparagine 644, asparagine 689, and asparagine 734. 2 disordered regions span residues 770-799 (LIST…NGQP) and 860-889 (LIST…NGQP). Residues 773–795 (TTTEPWTGTFTSTSTEMTTVTGT) are compositionally biased toward low complexity. Over residues 863–885 (TTTEPWTGTFTSTSTEMTTITGT) the composition is skewed to low complexity. The tract at residues 995 to 1024 (LISTTTEPWTGTFTSTSTEMTTVTGTNGQP) is disordered. Low complexity predominate over residues 998 to 1020 (TTTEPWTGTFTSTSTEMTTVTGT). The N-linked (GlcNAc...) asparagine glycan is linked to asparagine 1114. A run of 2 repeats spans residues 1118 to 1137 (VISS…TSSP) and 1138 to 1157 (VISS…IFSE). The tract at residues 1118–1157 (VISSSVISSSVTSSLFTSSPVISSSVISSSTTTSTSIFSE) is 2 X 20 AA approximate tandem repeats, Ser/Thr-rich. Low complexity predominate over residues 1161 to 1220 (SSVIPTSSSTSGSSESETSSAGSVSSSSFISSESSKSPTYSSSSLPLVTSATTSQETASS). The interval 1161 to 1232 (SSVIPTSSST…PATTTKTSEQ (72 aa)) is disordered. A compositionally biased stretch (polar residues) spans 1222 to 1232 (PPATTTKTSEQ). A run of 6 repeats spans residues 1226–1276 (TTKT…CPIS), 1291–1341 (TTET…CPIS), 1342–1392 (TTES…RPQT), 1408–1416 (ETTTNTLAA), 1417–1425 (ETTTNTVAA), and 1426–1434 (ETITNTGAA). Positions 1226-1392 (TTKTSEQTTL…TVYPTWRPQT (167 aa)) are 3 X 51 AA approximate repeats, Ser/Thr-rich. Positions 1392–1404 (TANEESVSSKMNS) are enriched in polar residues. Residues 1392-1414 (TANEESVSSKMNSATGETTTNTL) form a disordered region. Over residues 1405-1414 (ATGETTTNTL) the composition is skewed to low complexity. The segment at 1408–1434 (ETTTNTLAAETTTNTVAAETITNTGAA) is 3 X 9 AA approximate tandem repeats, Thr-rich. The interval 1468 to 1497 (VSVSETGNTKSLTSSGLSTMSQQPRSTPAS) is disordered. The span at 1472–1497 (ETGNTKSLTSSGLSTMSQQPRSTPAS) shows a compositional bias: polar residues. Glycine 1514 is lipidated: GPI-anchor amidated glycine. Residues 1515-1537 (SANSLLAGSGLSVFIASLLLAII) constitute a propeptide, removed in mature form.

This sequence belongs to the flocculin family. Extensively N- and O-glycosylated. In terms of processing, the GPI-anchor is attached to the protein in the endoplasmic reticulum and serves to target the protein to the cell surface. There, the glucosamine-inositol phospholipid moiety is cleaved off and the GPI-modified mannoprotein is covalently attached via its lipidless GPI glycan remnant to the 1,6-beta-glucan of the outer cell wall layer.

It is found in the cell membrane. Its subcellular location is the secreted. It localises to the cell wall. Functionally, cell wall protein that participates directly in adhesive cell-cell interactions during yeast flocculation, a reversible, asexual and Ca(2+)-dependent process in which cells adhere to form aggregates (flocs) consisting of thousands of cells. The lectin-like protein sticks out of the cell wall of flocculent cells and selectively binds mannose residues in the cell walls of adjacent cells. Activity is inhibited by mannose, but not by glucose, maltose, sucrose or galactose. Also involved in cell-substrate adhesion. This chain is Flocculation protein FLO1 (FLO1), found in Saccharomyces cerevisiae (strain ATCC 204508 / S288c) (Baker's yeast).